The chain runs to 503 residues: MAYAHVFASLTISTISLRRFLPRLHRNHSVKPNSRIICNLKLNYSAGKFREMGLSRSVELDQFITSEEEEGEAEEIGEGFFEAIEELERMTREPSDILEEMNHRLSSRELQLMLVYFAQEGRDSWCTLEVFEWLKKENRVDEEIMELMVSIMCGWVKKLIEDECNAHQVFDLLIEMDCVGLKPGFSMMDKVIALYCEMGKKESAVLFVKEVLRRRDGFGYSVVGGGGSEGRKGGPVGYLAWKFMVDGDYRKAVDMVMELRLSGLKPEAYSYLIAMTAIVKELNSLGKTLRELKRFARAGFVAEIDDHDRVLIEKYQSETLSRGLQLATWAVEEGQENDSIIGVVHERLLAMYICAGRGPEAEKQLWKMKLAGREPEADLHDIVMAICASQKEVNAVSRLLTRVEFMGSQRKKKTLSWLLRGYVKGGHFEEAAETLVSMIDSGLHPEYIDRVAVMQGMTRKIQRPRDVEAYMSLCKRLFDAGLVGPCLVYMYIDKYKLWIVKMM.

A chloroplast-targeting transit peptide spans 1 to 50; the sequence is MAYAHVFASLTISTISLRRFLPRLHRNHSVKPNSRIICNLKLNYSAGKFR. 3 PPR repeats span residues 341–375, 376–410, and 411–445; these read IGVV…GREP, EADL…GSQR, and KKKT…GLHP.

This sequence belongs to the PPR family. P subfamily.

The protein resides in the plastid. It is found in the chloroplast. The chain is Pentatricopeptide repeat-containing protein At2g30100, chloroplastic from Arabidopsis thaliana (Mouse-ear cress).